The sequence spans 906 residues: Cadherin-2A (906 aa).

A signal peptide spans Met1–Ala28. The propeptide occupies Leu29–Arg160. Cadherin domains follow at residues Asp161 to Phe268, Leu269 to Phe383, Thr384 to Phe498, Thr499 to Pro604, and Tyr605 to Pro714. Residues Asp161–Ala724 lie on the Extracellular side of the membrane. Ca(2+) contacts are provided by Glu171, Asp227, Glu229, Asp260, Met261, Asn262, Asp263, and Asn264. Asn274 carries an N-linked (GlcNAc...) asparagine glycan. Residues Asp294, Asp296, and Asn302 each contribute to the Ca(2+) site. The N-linked (GlcNAc...) asparagine glycan is linked to Asn326. Asp354 serves as a coordination point for Ca(2+). Asn403, Asn573, Asn623, Asn652, and Asn693 each carry an N-linked (GlcNAc...) asparagine glycan. A helical transmembrane segment spans residues Ile725 to Met746. The Cytoplasmic segment spans residues Lys747 to Asp906. 2 disordered regions span residues Glu775–Thr800 and Ser863–Tyr884. Acidic residues predominate over residues Glu776 to Tyr785. The segment covering Ser863 to Gly880 has biased composition (low complexity).

Homodimer (via extracellular region). Can also form heterodimers with other cadherins (via extracellular region). Dimerization occurs in trans, i.e. with a cadherin chain from another cell.

Its subcellular location is the cell membrane. The protein resides in the sarcolemma. It is found in the cell junction. It localises to the cell surface. The protein localises to the desmosome. Its subcellular location is the adherens junction. Calcium-dependent cell adhesion protein; preferentially mediates homotypic cell-cell adhesion. Cadherins may thus contribute to the sorting of heterogeneous cell types, and thereby play an important role during embryonic development. Required for proper neurite branching. Required for pre- and postsynaptic organization. This chain is Cadherin-2A (cdh2-a), found in Xenopus laevis (African clawed frog).